The following is a 2292-amino-acid chain: Protein Ycf2 (2292 aa).

Residue 1640 to 1647 (GSIGIGRS) participates in ATP binding.

This sequence belongs to the Ycf2 family.

Its subcellular location is the plastid. The protein resides in the chloroplast stroma. Its function is as follows. Probable ATPase of unknown function. Its presence in a non-photosynthetic plant (Epifagus virginiana) and experiments in tobacco indicate that it has an essential function which is probably not related to photosynthesis. The sequence is that of Protein Ycf2 from Liriodendron tulipifera (Tuliptree).